Reading from the N-terminus, the 556-residue chain is Formate--tetrahydrofolate ligase (556 aa).

Thr65–Ser72 contacts ATP.

It belongs to the formate--tetrahydrofolate ligase family.

The catalysed reaction is (6S)-5,6,7,8-tetrahydrofolate + formate + ATP = (6R)-10-formyltetrahydrofolate + ADP + phosphate. The protein operates within one-carbon metabolism; tetrahydrofolate interconversion. The polypeptide is Formate--tetrahydrofolate ligase (Clostridium perfringens (strain ATCC 13124 / DSM 756 / JCM 1290 / NCIMB 6125 / NCTC 8237 / Type A)).